Consider the following 209-residue polypeptide: MIGLIGRKVGMTRIFTEEGISIPVTVVEVEANRVTQVKSLETDGYNAIQITTGTKKANRVSKPAAGHFAKAGVEAGRGLWEFRLENGEEFAVGAELNVELFNEVKKVDVTGTSKGKGFQGVIKRWNFSTQDMTHGNSLSHRAPGSIGQCQTPGRVFKGKKMAGHMGAERVTTQNLEIVRVDAERNLLLIKGAVPGSIGGNVIVKPAVKA.

At glutamine 150 the chain carries N5-methylglutamine.

It belongs to the universal ribosomal protein uL3 family. Part of the 50S ribosomal subunit. Forms a cluster with proteins L14 and L19. In terms of processing, methylated by PrmB.

Functionally, one of the primary rRNA binding proteins, it binds directly near the 3'-end of the 23S rRNA, where it nucleates assembly of the 50S subunit. The polypeptide is Large ribosomal subunit protein uL3 (Photobacterium profundum (strain SS9)).